A 149-amino-acid polypeptide reads, in one-letter code: Protein AE7-like 2 (149 aa).

It belongs to the MIP18 family.

In terms of biological role, may play a role in chromosome segregation through establishment of sister chromatid cohesion. Unable to complement ae7 mutants, and thus probably not involved in the cytosolic iron-sulfur assembly (CIA) pathway. This Arabidopsis thaliana (Mouse-ear cress) protein is Protein AE7-like 2.